The chain runs to 305 residues: uncharacterized protein (305 aa).

It belongs to the ADP-ribosylglycohydrolase family.

This is an uncharacterized protein from Archaeoglobus fulgidus (strain ATCC 49558 / DSM 4304 / JCM 9628 / NBRC 100126 / VC-16).